A 406-amino-acid polypeptide reads, in one-letter code: Replication protein (406 aa).

In terms of biological role, is involved in replication of pIP404. This chain is Replication protein (rep), found in Clostridium perfringens.